We begin with the raw amino-acid sequence, 332 residues long: Hygromycin-B 7''-O-kinase (332 aa).

The Proton acceptor role is filled by Asp223.

It belongs to the aminoglycoside phosphotransferase family.

It carries out the reaction hygromycin B + ATP = 7''-O-phosphohygromycin B + ADP + H(+). Functionally, the aminoglycoside phosphotransferases achieve inactivation of their antibiotic substrates by phosphorylation. The sequence is that of Hygromycin-B 7''-O-kinase (hyg) from Streptomyces hygroscopicus.